A 507-amino-acid chain; its full sequence is MVTLKADEISNIIRERIEQYNREVKIVNTGTVLQVGDGIARIYGLDEVMAGELVEFEEGTIGIALNLESNNVGVVLMGDGLMIQEGSSVKATGKIAQIPVSEAYLGRVINALANPIDGRGKISASESRLIESPAPGIISRRSVYEPLQTGLIAIDSMIPIGRGQRELIIGDRQTGKTAVATDTILNQQGQNVICVYVAIGQKASSVAQVVTSLQERGAMEYTIVVAETADSPATLQYLAPYTGAALAEYFMYREQHTLIIYDDLSKQAQAYRQMSLLLRRPPGREAYPGDVFYLHSRLLERAAKLSSQLGEGSMTALPIVETQSGDVSAYIPTNVISITDGQIFLSADLFNAGIRPAINVGISVSRVGSAAQIKAMKQVAGKLKLELAQFAELEAFAQFSSDLDKATQNQLARGQRLRELLKQSQSAPLTVEEQIMTIYTGTNGYLDGLEIGQVRKFLVQLRTYLKTNKPQFQEIISSTKTLTDEAESVLKEGIQEQLERFLLQEKL.

An ATP-binding site is contributed by 170-177 (GDRQTGKT). At Thr-257 the chain carries Phosphothreonine.

The protein belongs to the ATPase alpha/beta chains family. In terms of assembly, F-type ATPases have 2 components, CF(1) - the catalytic core - and CF(0) - the membrane proton channel. CF(1) has five subunits: alpha(3), beta(3), gamma(1), delta(1), epsilon(1). CF(0) has four main subunits: a, b, b' and c.

Its subcellular location is the plastid. It is found in the chloroplast thylakoid membrane. The enzyme catalyses ATP + H2O + 4 H(+)(in) = ADP + phosphate + 5 H(+)(out). In terms of biological role, produces ATP from ADP in the presence of a proton gradient across the membrane. The alpha chain is a regulatory subunit. The polypeptide is ATP synthase subunit alpha, chloroplastic (Aethionema grandiflorum (Persian stone-cress)).